The primary structure comprises 262 residues: Hydroxyethylthiazole kinase (262 aa).

A substrate-binding site is contributed by Met43. Positions 118 and 164 each coordinate ATP. Position 191 (Ala191) interacts with substrate.

Belongs to the Thz kinase family. Mg(2+) serves as cofactor.

It catalyses the reaction 5-(2-hydroxyethyl)-4-methylthiazole + ATP = 4-methyl-5-(2-phosphooxyethyl)-thiazole + ADP + H(+). The protein operates within cofactor biosynthesis; thiamine diphosphate biosynthesis; 4-methyl-5-(2-phosphoethyl)-thiazole from 5-(2-hydroxyethyl)-4-methylthiazole: step 1/1. Functionally, catalyzes the phosphorylation of the hydroxyl group of 4-methyl-5-beta-hydroxyethylthiazole (THZ). This chain is Hydroxyethylthiazole kinase, found in Cereibacter sphaeroides (strain KD131 / KCTC 12085) (Rhodobacter sphaeroides).